A 344-amino-acid polypeptide reads, in one-letter code: D-beta-hydroxybutyrate dehydrogenase, mitochondrial (344 aa).

The transit peptide at 1 to 46 (MLTARLSRPLSQLPRKTLNFSDRENGTRGSLLLYSAPFVPVGRRTY) directs the protein to the mitochondrion. 59–83 (LITGCDSGFGFSLAKHLHSEGFLVF) is a binding site for NAD(+). Lys73 and Lys97 each carry N6-acetyllysine. Lys103 is modified (N6-acetyllysine; alternate). Residue Lys103 is modified to N6-succinyllysine; alternate. Residue Lys177 is modified to N6-acetyllysine. A substrate-binding site is contributed by Ser195. Catalysis depends on Tyr208, which acts as the Proton acceptor. Residue Lys212 is modified to N6-acetyllysine. Ser219 is a glycosylation site (O-linked (GlcNAc) serine). The residue at position 246 (Ser246) is a Phosphoserine. An N6-acetyllysine; alternate modification is found at Lys260. The residue at position 260 (Lys260) is an N6-succinyllysine; alternate. Lys281 is modified (N6-acetyllysine).

Belongs to the short-chain dehydrogenases/reductases (SDR) family. In terms of assembly, homotetramer.

The protein resides in the mitochondrion inner membrane. Its subcellular location is the mitochondrion matrix. The catalysed reaction is (R)-3-hydroxybutanoate + NAD(+) = acetoacetate + NADH + H(+). Its activity is regulated as follows. Requires phosphatidylcholine as an allosteric activator for enzymatic activity. This is D-beta-hydroxybutyrate dehydrogenase, mitochondrial from Bos taurus (Bovine).